The primary structure comprises 1270 residues: MGHSRRPAGGEKKSRGFGRSKAAADVGDGRQAGKPQVKKAVFESTKKKEIGVSDLTLLSKISNEAINDNLKLRFEHDEIYTYIGHVLVSVNPFRDLGIYTDRVLESYRGKNRLEVPPHVFAVAESAYYNMKSYKDNQCVIISGESGAGKTEAAKRIMQYIASVSGGSDSSIQQTKDMVLATNPLLESFGNAKTLRNNNSSRFGKYLELEFNTNGEPVGANITNYLLEKSRVVGQITNERNFHIFYQFTKAAPQKYRDMFGIQQPQSYLYTSRSKCYDVPGVDDAAEFRDTINAMGVIGMTEAEQDEVFRMLAAILWIGNIQFAEDDSGNAAITDQSVVDFVAYLLEVDAAQVNKALTIRLMETARGGRRGSVYEVPLNTVQALAVRDALSKAIYFNLFDWIVGRVNSSLTARGSVANSIGILDIYGFEIFEKNSFEQLCINYVNEKLQQIFIQLTLKAEQDEYAREQIQWTPIKYFDNKVVCSLIEDKRPPGVFAALNDACATAHADSGAADNTFVGRLNFLGQNPNFESRQGQFIVKHYAGDVSYAVEGMTDKNKDQLLKDLLNLAGSSSNQFVHTLFPNQVNQDDKRRPPTASDKIKASANDLVATLMKAQPSYIRTIKPNDNKAPREYNQGNVLHQIKYLGLQENVRIRRAGFAYRQTFDKFVERFYLLSPKTSYAGDYTWTGDEESGARQILKDTSIPAEEYQMGITKVFVKTPETLFALETMRDRYWHNMAIRIQRAWRNYLRYRIECAIRIQRFWRRMTGGLEFIKLRDQGHQVLQGKKERRRMSLLGSRRFLGDYVGVGNKGGPGEMIHNGAGINGSENILFSCRGEVLISKFGRSSKPAPRIFVLLTTQTNRHVYIVAQTLVNNQLQIASERTIPIGAIKSVSTSNLKDDWFSLVVGGQEPDPLMNCVFKTEFFTHLTNALRGQLNLKIADHIEYNKKPGKLATVKVVKDPGASNVDSYKSSTIHTSAGEPPSSVSKPTPRPKQVAARPVTKGKLLRPGGPGGGPSKLASRPAPARQPMPQPTPQPAAVQPPPAPRPAVSPAAQPRPVPQPVAAVAAAQHTRNASSSSTRAPPPPPPATPPAAQRKPMAKVLYDFNSDQSNELSIRAGDLVQIVSKEGNGWWLCMNTTTSVQGWTPEAYLEEQVAASPKPAPPPPPPAAPRASPVPATNGAAAAVAAKAKAKPAPPAPPAKRPNMAGRKVAPAPPAAPRDSAVSMNSHDSSGGSGRGTPNSASNASLAGGLAEALKARQHAMQGHHDEDDEW.

The disordered stretch occupies residues 1-40; it reads MGHSRRPAGGEKKSRGFGRSKAAADVGDGRQAGKPQVKKA. One can recognise a Myosin motor domain in the interval 50 to 729; the sequence is IGVSDLTLLS…TLFALETMRD (680 aa). ATP is bound at residue 143–150; it reads GESGAGKT. Ser371 carries the post-translational modification Phosphoserine. Residues 418–500 are actin-binding; that stretch reads SIGILDIYGF…PGVFAALNDA (83 aa). IQ domains follow at residues 733-753 and 754-779; these read HNMA…RIEC and AIRI…QGHQ. Positions 787-980 constitute a TH1 domain; sequence RRRMSLLGSR…TIHTSAGEPP (194 aa). Disordered stretches follow at residues 960–1102 and 1144–1270; these read GASN…VLYD and PEAY…DDEW. Over residues 963 to 974 the composition is skewed to polar residues; the sequence is NVDSYKSSTIHT. The segment covering 1023–1058 has biased composition (pro residues); it reads ARQPMPQPTPQPAAVQPPPAPRPAVSPAAQPRPVPQ. Positions 1059–1078 are enriched in low complexity; that stretch reads PVAAVAAAQHTRNASSSSTR. Residues 1079–1088 are compositionally biased toward pro residues; the sequence is APPPPPPATP. The region spanning 1092–1153 is the SH3 domain; the sequence is QRKPMAKVLY…PEAYLEEQVA (62 aa). Residues 1157–1167 show a composition bias toward pro residues; it reads KPAPPPPPPAA. Composition is skewed to low complexity over residues 1168–1186 and 1238–1252; these read PRAS…VAAK and NSAS…LAEA.

It belongs to the TRAFAC class myosin-kinesin ATPase superfamily. Myosin family. In terms of processing, phosphorylation of the TEDS site (Ser-371) is required for the polarization of the actin cytoskeleton. Phosphorylation probably activates the myosin-I ATPase activity.

It localises to the cytoplasm. The protein resides in the cytoskeleton. It is found in the actin patch. Its function is as follows. Type-I myosin implicated in the organization of the actin cytoskeleton. Required for proper actin cytoskeleton polarization. At the cell cortex, assembles in patch-like structures together with proteins from the actin-polymerizing machinery and promotes actin assembly. Functions as actin nucleation-promoting factor (NPF) for the Arp2/3 complex. Plays an important role in polarized growth, spore germination, hyphal morphogenesis, and septal wall formation. This is Myosin-1 (myoA) from Aspergillus niger (strain ATCC MYA-4892 / CBS 513.88 / FGSC A1513).